The sequence spans 368 residues: Phosphate acyltransferase (368 aa).

A disordered region spans residues 334-368 (AAPLGESGRDADGAGQASPSAGQPAEPSAALSSKT).

This sequence belongs to the PlsX family. As to quaternary structure, homodimer. Probably interacts with PlsY.

The protein resides in the cytoplasm. It carries out the reaction a fatty acyl-[ACP] + phosphate = an acyl phosphate + holo-[ACP]. It functions in the pathway lipid metabolism; phospholipid metabolism. Catalyzes the reversible formation of acyl-phosphate (acyl-PO(4)) from acyl-[acyl-carrier-protein] (acyl-ACP). This enzyme utilizes acyl-ACP as fatty acyl donor, but not acyl-CoA. The polypeptide is Phosphate acyltransferase (Burkholderia thailandensis (strain ATCC 700388 / DSM 13276 / CCUG 48851 / CIP 106301 / E264)).